The primary structure comprises 171 residues: S-ribosylhomocysteine lyase (171 aa).

Positions 54, 58, and 128 each coordinate Fe cation.

This sequence belongs to the LuxS family. Homodimer. The cofactor is Fe cation.

It catalyses the reaction S-(5-deoxy-D-ribos-5-yl)-L-homocysteine = (S)-4,5-dihydroxypentane-2,3-dione + L-homocysteine. Involved in the synthesis of autoinducer 2 (AI-2) which is secreted by bacteria and is used to communicate both the cell density and the metabolic potential of the environment. The regulation of gene expression in response to changes in cell density is called quorum sensing. Catalyzes the transformation of S-ribosylhomocysteine (RHC) to homocysteine (HC) and 4,5-dihydroxy-2,3-pentadione (DPD). The chain is S-ribosylhomocysteine lyase from Escherichia coli (strain 55989 / EAEC).